Consider the following 131-residue polypeptide: Small ribosomal subunit protein bS16 (131 aa).

Over residues 87 to 117 the composition is skewed to basic and acidic residues; sequence IGKSKQEELRKSEAKTSAKNKKANEEKANEE. The segment at 87 to 131 is disordered; that stretch reads IGKSKQEELRKSEAKTSAKNKKANEEKANEEKVEESETLEASSEA.

The protein belongs to the bacterial ribosomal protein bS16 family.

The chain is Small ribosomal subunit protein bS16 from Prochlorococcus marinus (strain SARG / CCMP1375 / SS120).